We begin with the raw amino-acid sequence, 450 residues long: ATP-dependent protease ATPase subunit HslU (450 aa).

Residues valine 27, 69 to 74, aspartate 263, glutamate 328, and arginine 400 each bind ATP; that span reads GVGKTE.

This sequence belongs to the ClpX chaperone family. HslU subfamily. A double ring-shaped homohexamer of HslV is capped on each side by a ring-shaped HslU homohexamer. The assembly of the HslU/HslV complex is dependent on binding of ATP.

The protein localises to the cytoplasm. ATPase subunit of a proteasome-like degradation complex; this subunit has chaperone activity. The binding of ATP and its subsequent hydrolysis by HslU are essential for unfolding of protein substrates subsequently hydrolyzed by HslV. HslU recognizes the N-terminal part of its protein substrates and unfolds these before they are guided to HslV for hydrolysis. This is ATP-dependent protease ATPase subunit HslU from Aquifex aeolicus (strain VF5).